The sequence spans 104 residues: Large ribosomal subunit protein uL24 (104 aa).

The protein belongs to the universal ribosomal protein uL24 family. As to quaternary structure, part of the 50S ribosomal subunit.

Its function is as follows. One of two assembly initiator proteins, it binds directly to the 5'-end of the 23S rRNA, where it nucleates assembly of the 50S subunit. Functionally, one of the proteins that surrounds the polypeptide exit tunnel on the outside of the subunit. This chain is Large ribosomal subunit protein uL24, found in Dichelobacter nodosus (strain VCS1703A).